We begin with the raw amino-acid sequence, 370 residues long: Anthranilate phosphoribosyltransferase (370 aa).

Residues 1–27 (MALSAEGSSGGSRGGSPKAEAASVPSW) form a disordered region. Residues Gly107, 110–111 (GD), Thr115, 117–120 (NLST), 135–143 (KHGNRAASS), and Gly147 each bind 5-phospho-alpha-D-ribose 1-diphosphate. Gly107 is a binding site for anthranilate. A Mg(2+)-binding site is contributed by Ser119. Position 138 (Asn138) interacts with anthranilate. An anthranilate-binding site is contributed by Arg193. Mg(2+) is bound by residues Asp251 and Glu252.

The protein belongs to the anthranilate phosphoribosyltransferase family. Homodimer. It depends on Mg(2+) as a cofactor.

It carries out the reaction N-(5-phospho-beta-D-ribosyl)anthranilate + diphosphate = 5-phospho-alpha-D-ribose 1-diphosphate + anthranilate. Its pathway is amino-acid biosynthesis; L-tryptophan biosynthesis; L-tryptophan from chorismate: step 2/5. Its function is as follows. Catalyzes the transfer of the phosphoribosyl group of 5-phosphorylribose-1-pyrophosphate (PRPP) to anthranilate to yield N-(5'-phosphoribosyl)-anthranilate (PRA). The chain is Anthranilate phosphoribosyltransferase from Mycobacterium bovis (strain ATCC BAA-935 / AF2122/97).